A 363-amino-acid polypeptide reads, in one-letter code: tRNA N6-adenosine threonylcarbamoyltransferase (363 aa).

Residues His-121 and His-125 each coordinate Fe cation. Substrate contacts are provided by residues 143–147 (LASGG), Asp-176, Gly-189, and Asn-287. Residue Asp-315 participates in Fe cation binding.

Belongs to the KAE1 / TsaD family. The cofactor is Fe(2+).

Its subcellular location is the cytoplasm. It catalyses the reaction L-threonylcarbamoyladenylate + adenosine(37) in tRNA = N(6)-L-threonylcarbamoyladenosine(37) in tRNA + AMP + H(+). Required for the formation of a threonylcarbamoyl group on adenosine at position 37 (t(6)A37) in tRNAs that read codons beginning with adenine. Is involved in the transfer of the threonylcarbamoyl moiety of threonylcarbamoyl-AMP (TC-AMP) to the N6 group of A37, together with TsaE and TsaB. TsaD likely plays a direct catalytic role in this reaction. The polypeptide is tRNA N6-adenosine threonylcarbamoyltransferase (Rhodopseudomonas palustris (strain BisA53)).